The following is a 551-amino-acid chain: Cytochrome c oxidase subunit 1 homolog (551 aa).

The next 3 helical transmembrane spans lie at 14 to 34 (GELGLILVFAALGFFSIVVAA), 40 to 60 (EYAFHAYLFAAASIATVFVIG), and 88 to 108 (VGTLLAVFWGIAGFLIGVIIA). Residue His-132 participates in heme b binding. Helical transmembrane passes span 133-153 (TSAVIFAFGGNVLIATSFYVV), 169-189 (FVVLGYNFFIVIAGTGYLLGI), 202-222 (ADLWLTIVWVTYFLVFLGTVL), 229-249 (IYVANWFYLAFILTIAVLHLG), 280-300 (GHNAVGFFLTAGFLALMYYFI), 313-333 (LSIVHFWALIFLYIWAGPHHL), 345-365 (LGMTFSIMLWMPSWGGMINGL), and 383-403 (MMVVAVAFYGMATFEGPMMSV). Cu cation is bound by residues His-281, His-331, and His-332. 2 residues coordinate heme b: His-419 and His-421. Transmembrane regions (helical) follow at residues 424–444 (ALGWVAYISFGAIYCLIPWLW), 459–479 (FWVSTLGIVLYICAMWVAGIL), and 513–533 (IGGILFLAGSLIMAWNVFMTI).

The protein belongs to the heme-copper respiratory oxidase family. Requires Cu(2+) as cofactor. The cofactor is heme b.

It localises to the cell membrane. The catalysed reaction is 4 Fe(II)-[cytochrome c] + O2 + 8 H(+)(in) = 4 Fe(III)-[cytochrome c] + 2 H2O + 4 H(+)(out). It participates in energy metabolism; oxidative phosphorylation. Functionally, cytochrome c oxidase is the component of the respiratory chain that catalyzes the reduction of oxygen to water. Subunits 1-3 form the functional core of the enzyme complex. Co I is the catalytic subunit of the enzyme. Electrons originating in cytochrome c or a quinol are transferred to the bimetallic center formed by a high-spin heme and copper B. This chain is Cytochrome c oxidase subunit 1 homolog (fixN), found in Azorhizobium caulinodans (strain ATCC 43989 / DSM 5975 / JCM 20966 / LMG 6465 / NBRC 14845 / NCIMB 13405 / ORS 571).